Here is a 598-residue protein sequence, read N- to C-terminus: NADH-quinone oxidoreductase subunit C/D (598 aa).

An NADH dehydrogenase I subunit C region spans residues M1–E189. The tract at residues D213–R598 is NADH dehydrogenase I subunit D.

This sequence in the N-terminal section; belongs to the complex I 30 kDa subunit family. It in the C-terminal section; belongs to the complex I 49 kDa subunit family. In terms of assembly, NDH-1 is composed of 13 different subunits. Subunits NuoB, CD, E, F, and G constitute the peripheral sector of the complex.

The protein localises to the cell inner membrane. The catalysed reaction is a quinone + NADH + 5 H(+)(in) = a quinol + NAD(+) + 4 H(+)(out). Functionally, NDH-1 shuttles electrons from NADH, via FMN and iron-sulfur (Fe-S) centers, to quinones in the respiratory chain. The immediate electron acceptor for the enzyme in this species is believed to be ubiquinone. Couples the redox reaction to proton translocation (for every two electrons transferred, four hydrogen ions are translocated across the cytoplasmic membrane), and thus conserves the redox energy in a proton gradient. In Proteus mirabilis (strain HI4320), this protein is NADH-quinone oxidoreductase subunit C/D.